The following is a 306-amino-acid chain: Proline-rich transmembrane protein 1 (306 aa).

Positions 1 to 142 (MSSEKSGLPD…PPPAPAQTAQ (142 aa)) are disordered. At 1-223 (MSSEKSGLPD…LEPRRPPHDY (223 aa)) the chain is on the cytoplasmic side. A compositionally biased stretch (pro residues) spans 15-36 (TSPPPYNAPQPPAEPPAPPPQA). The segment covering 40–49 (SHHHHHHHYH) has biased composition (basic residues). Composition is skewed to pro residues over residues 87 to 111 (HAPP…PPDP) and 121 to 137 (PLPP…PPAP). Residues 224-244 (MPIAVLTTICCFWPTGIIAIF) form a helical membrane-spanning segment. Topologically, residues 245 to 275 (KAVQVRTALARGDMVSAEIASREARNFSFIS) are extracellular. The helical intramembrane region spans 276 to 296 (LAVGIAAMVLCTILTVVIIIA). At 297 to 306 (AQHHENYWDP) the chain is on the extracellular side.

This sequence belongs to the CD225/Dispanin family. Component of the outer core of AMPAR complex. AMPAR complex consists of an inner core made of 4 pore-forming GluA/GRIA proteins (GRIA1, GRIA2, GRIA3 and GRIA4) and 4 major auxiliary subunits arranged in a twofold symmetry. One of the two pairs of distinct binding sites is occupied either by CNIH2, CNIH3 or CACNG2, CACNG3. The other harbors CACNG2, CACNG3, CACNG4, CACNG8 or GSG1L. This inner core of AMPAR complex is complemented by outer core constituents binding directly to the GluA/GRIA proteins at sites distinct from the interaction sites of the inner core constituents. Outer core constituents include at least PRRT1, PRRT2, CKAMP44/SHISA9, FRRS1L and NRN1. The proteins of the inner and outer core serve as a platform for other, more peripherally associated AMPAR constituents. Alone or in combination, these auxiliary subunits control the gating and pharmacology of the AMPAR complex and profoundly impact their biogenesis and protein processing.

Its subcellular location is the cell membrane. The protein resides in the synapse. Required to maintain a pool of extrasynaptic AMPA-regulated glutamate receptors (AMPAR) which is necessary for synapse development and function. Regulates basal AMPAR function and synaptic transmission during development but is dispensable at mature hippocampal synapses. Plays a role in regulating basal phosphorylation levels of glutamate receptor GRIA1 and promotes GRIA1 and GRIA2 cell surface expression. The protein is Proline-rich transmembrane protein 1 of Homo sapiens (Human).